A 713-amino-acid polypeptide reads, in one-letter code: Nucleoporin NUP82 (713 aa).

Residues 1–409 (MSQSSRLSAL…SDLNPLAGLK (409 aa)) are interaction with NUP116. The interval 463–713 (TSISTEKSDT…VSQEFTTKTQ (251 aa)) is interaction with NSP1 and NUP159. Positions 582 to 713 (EAQNKKWDAQ…VSQEFTTKTQ (132 aa)) form a coiled coil. The short motif at 607–623 (KKLSQIAESNKFKEKKI) is the Bipartite nuclear localization signal element.

As to quaternary structure, component of the nuclear pore complex (NPC). NPC constitutes the exclusive means of nucleocytoplasmic transport. NPCs allow the passive diffusion of ions and small molecules and the active, nuclear transport receptor-mediated bidirectional transport of macromolecules such as proteins, RNAs, ribonucleoparticles (RNPs), and ribosomal subunits across the nuclear envelope. Due to its 8-fold rotational symmetry, all subunits are present with 8 copies or multiples thereof. NUP82 is part of the NUP82 subcomplex. This subcomplex is the base for interactions with NUP116 and GLE2, with NUP42 and GLE1 and with DYN2.

The protein localises to the nucleus. Its subcellular location is the nuclear pore complex. The protein resides in the nucleus membrane. In terms of biological role, functions as a component of the nuclear pore complex (NPC). NPC components, collectively referred to as nucleoporins (NUPs), can play the role of both NPC structural components and of docking or interaction partners for transiently associated nuclear transport factors. It is specifically involved as part of the NUP82-NUP159-NSP1 subcomplex in nuclear mRNA and pre-ribosome export by acting as a linker tethering nucleoporins that are directly involved in nuclear transport to the NPC via its coiled-coil domain. This is Nucleoporin NUP82 (NUP82) from Saccharomyces cerevisiae (strain ATCC 204508 / S288c) (Baker's yeast).